A 189-amino-acid polypeptide reads, in one-letter code: Interferon alpha-6 (189 aa).

An N-terminal signal peptide occupies residues 1-20; it reads MALPFALLMALVVLSCKSSC. 2 disulfides stabilise this stretch: cysteine 24–cysteine 122 and cysteine 52–cysteine 162.

This sequence belongs to the alpha/beta interferon family.

The protein resides in the secreted. Produced by macrophages, IFN-alpha have antiviral activities. Interferon stimulates the production of two enzymes: a protein kinase and an oligoadenylate synthetase. The protein is Interferon alpha-6 (IFNA6) of Homo sapiens (Human).